Consider the following 157-residue polypeptide: Small ribosomal subunit protein uS17 (157 aa).

The protein belongs to the universal ribosomal protein uS17 family.

This Dunaliella tertiolecta (Green alga) protein is Small ribosomal subunit protein uS17 (RPS11).